Reading from the N-terminus, the 104-residue chain is uncharacterized protein (104 aa).

A coiled-coil region spans residues 42–104; that stretch reads ARDSFDQDFE…AREERHKLGR (63 aa).

Belongs to the WXG100 family.

This is an uncharacterized protein from Bacillus subtilis (strain 168).